The chain runs to 76 residues: MGGISIWQLLIIALIVVLLFGTKKLRSLGGDLGGAVKGFKNAMSSEDEKKAIEDTSAEKTAQTEEKKTESKDKEQA.

Residues 1 to 21 (MGGISIWQLLIIALIVVLLFG) form a helical membrane-spanning segment. The disordered stretch occupies residues 43–76 (MSSEDEKKAIEDTSAEKTAQTEEKKTESKDKEQA). Residues 46-76 (EDEKKAIEDTSAEKTAQTEEKKTESKDKEQA) show a composition bias toward basic and acidic residues.

The protein belongs to the TatA/E family. The Tat system comprises two distinct complexes: a TatABC complex, containing multiple copies of TatA, TatB and TatC subunits, and a separate TatA complex, containing only TatA subunits. Substrates initially bind to the TatABC complex, which probably triggers association of the separate TatA complex to form the active translocon.

The protein localises to the cell inner membrane. Its function is as follows. Part of the twin-arginine translocation (Tat) system that transports large folded proteins containing a characteristic twin-arginine motif in their signal peptide across membranes. TatA could form the protein-conducting channel of the Tat system. In Shewanella loihica (strain ATCC BAA-1088 / PV-4), this protein is Sec-independent protein translocase protein TatA.